The sequence spans 280 residues: MEAVSSEYYFPLYSALGYFALVFGIGEIARIITAKYVSPRGNSQLFLYELIGTIQMCTCVYENGIIFKNYGFPAIFICVALLLTAGNIFNRGAMTNCAPIFEQFVFGNLGSSKFLTILSAQLIGATFASKFAYLIWNITAPYSTAHLENASNLECILHYKQTAGIVIGFEIVGAFVVRIVVAQLLARPALIKLIPFAISAYLSLALYVVGVPGLNPIVATARLYGCRGIDNSSFFILYWFCPVLGWLTGAYVVGQKSPSKKSAKDVKAEKKAKAAAKKSD.

Residues Met-1–Tyr-8 lie on the Cytoplasmic side of the membrane. A helical transmembrane segment spans residues Tyr-9–Ala-29. The Extracellular segment spans residues Arg-30–Gly-64. The chain crosses the membrane as a helical span at residues Ile-65–Ala-85. Over Gly-86 to Phe-114 the chain is Cytoplasmic. Residues Leu-115–Ile-135 form a helical membrane-spanning segment. Over Trp-136–Gly-164 the chain is Extracellular. Residues Ile-165 to Leu-185 form a helical membrane-spanning segment. Residues Ala-186 to Leu-193 lie on the Cytoplasmic side of the membrane. The chain crosses the membrane as a helical span at residues Ile-194 to Leu-214. Topologically, residues Asn-215–Ser-233 are extracellular. A helical transmembrane segment spans residues Phe-234–Gly-254. Topologically, residues Gln-255–Asp-280 are cytoplasmic. The interval Lys-256–Asp-280 is disordered. Over residues Ser-262–Asp-280 the composition is skewed to basic and acidic residues.

This sequence belongs to the MIP/aquaporin (TC 1.A.8) family.

It is found in the membrane. This chain is Putative aquaporin-10 (aqp-10), found in Caenorhabditis elegans.